The following is a 336-amino-acid chain: MEKHWVLWSCAERWLLALASWSWGLCRICLLPLILTFNMYGGVILLLLIFVSIAGILFKFQDVLLYFPDQPSSSRLYIPMPTGIPHENIFIKTKDNIRLNLILLRYTGDNSSFSPTIIYFHGNAGNIGHRLPNALLMLVNLKVNLILVDYRGYGKSDGEPSEEGLYMDSEAVLDYVMTRPDIDKTKIILFGRSLGGAVAIHLASENAHRICALVLENTFLSIPHMASTLFSVLPMRYLPLWCYKNKFLSYRKIVQCRMPSLFISGLSDQLIPPFMMKQLYELSPSRTKRLAIFPDGTHNDTWQCQGYFTALEQFIKELNSNHCPEANAKTSNVTII.

Residues 37 to 57 traverse the membrane as a helical; Signal-anchor for type II membrane protein segment; it reads FNMYGGVILLLLIFVSIAGIL. Catalysis depends on charge relay system residues Ser-193, Asp-268, and His-298. A glycan (N-linked (GlcNAc...) asparagine) is linked at Asn-299.

This sequence belongs to the serine esterase family.

It localises to the membrane. The protein is Protein ABHD13 of Xenopus laevis (African clawed frog).